A 232-amino-acid chain; its full sequence is Small ribosomal subunit protein uS5 (232 aa).

A disordered region spans residues 1-47 (MAAEVTETAQPVETAASTDNNREQREPRRGGRERNPNRDRGNRDADK). A compositionally biased stretch (polar residues) spans 7-19 (ETAQPVETAASTD). Over residues 20-47 (NNREQREPRRGGRERNPNRDRGNRDADK) the composition is skewed to basic and acidic residues. The S5 DRBM domain maps to 50–113 (FLERVVTINR…EEAKKNFFRV (64 aa)).

Belongs to the universal ribosomal protein uS5 family. As to quaternary structure, part of the 30S ribosomal subunit. Contacts proteins S4 and S8.

Functionally, with S4 and S12 plays an important role in translational accuracy. Its function is as follows. Located at the back of the 30S subunit body where it stabilizes the conformation of the head with respect to the body. The sequence is that of Small ribosomal subunit protein uS5 from Leifsonia xyli subsp. xyli (strain CTCB07).